Here is a 685-residue protein sequence, read N- to C-terminus: DNA ligase (685 aa).

NAD(+) is bound by residues 47–51 (DSEYD), 96–97 (SL), and Glu-125. Residue Lys-127 is the N6-AMP-lysine intermediate of the active site. Residues Arg-148, Glu-185, Lys-304, and Lys-328 each contribute to the NAD(+) site. Positions 422, 425, 440, and 446 each coordinate Zn(2+). The BRCT domain maps to 605-685 (AEAQPLKGQT…ELLALLAANA (81 aa)).

This sequence belongs to the NAD-dependent DNA ligase family. LigA subfamily. Mg(2+) serves as cofactor. Mn(2+) is required as a cofactor.

The catalysed reaction is NAD(+) + (deoxyribonucleotide)n-3'-hydroxyl + 5'-phospho-(deoxyribonucleotide)m = (deoxyribonucleotide)n+m + AMP + beta-nicotinamide D-nucleotide.. DNA ligase that catalyzes the formation of phosphodiester linkages between 5'-phosphoryl and 3'-hydroxyl groups in double-stranded DNA using NAD as a coenzyme and as the energy source for the reaction. It is essential for DNA replication and repair of damaged DNA. This is DNA ligase from Shewanella baltica (strain OS223).